Here is a 310-residue protein sequence, read N- to C-terminus: Methionyl-tRNA formyltransferase (310 aa).

109–112 (SLLP) serves as a coordination point for (6S)-5,6,7,8-tetrahydrofolate.

This sequence belongs to the Fmt family.

The catalysed reaction is L-methionyl-tRNA(fMet) + (6R)-10-formyltetrahydrofolate = N-formyl-L-methionyl-tRNA(fMet) + (6S)-5,6,7,8-tetrahydrofolate + H(+). Its function is as follows. Attaches a formyl group to the free amino group of methionyl-tRNA(fMet). The formyl group appears to play a dual role in the initiator identity of N-formylmethionyl-tRNA by promoting its recognition by IF2 and preventing the misappropriation of this tRNA by the elongation apparatus. This Agathobacter rectalis (strain ATCC 33656 / DSM 3377 / JCM 17463 / KCTC 5835 / VPI 0990) (Eubacterium rectale) protein is Methionyl-tRNA formyltransferase.